Reading from the N-terminus, the 72-residue chain is Translation initiation factor IF-1 (72 aa).

The S1-like domain maps to 1–72 (MTKEDCIEMQ…SKGRIIFRSR (72 aa)).

The protein belongs to the IF-1 family. In terms of assembly, component of the 30S ribosomal translation pre-initiation complex which assembles on the 30S ribosome in the order IF-2 and IF-3, IF-1 and N-formylmethionyl-tRNA(fMet); mRNA recruitment can occur at any time during PIC assembly.

The protein resides in the cytoplasm. One of the essential components for the initiation of protein synthesis. Stabilizes the binding of IF-2 and IF-3 on the 30S subunit to which N-formylmethionyl-tRNA(fMet) subsequently binds. Helps modulate mRNA selection, yielding the 30S pre-initiation complex (PIC). Upon addition of the 50S ribosomal subunit IF-1, IF-2 and IF-3 are released leaving the mature 70S translation initiation complex. In Buchnera aphidicola subsp. Baizongia pistaciae (strain Bp), this protein is Translation initiation factor IF-1.